The chain runs to 384 residues: FAD-dependent urate hydroxylase (384 aa).

FAD is bound by residues Gly-11, 30–31, Ser-43, and Val-125; that span reads EA. Substrate-binding positions include Asn-178, Arg-204, and 216-218; that span reads YFF. FAD is bound by residues Asp-285 and 295-299; that span reads GQGGC.

This sequence belongs to the FAD-dependent urate hydroxylase family. FAD serves as cofactor.

It catalyses the reaction urate + NADH + O2 + H(+) = 5-hydroxyisourate + NAD(+) + H2O. It functions in the pathway purine metabolism; urate degradation. In terms of biological role, catalyzes the hydroxylation of uric acid to 5-hydroxyisourate. In Klebsiella pneumoniae, this protein is FAD-dependent urate hydroxylase (hpxO).